The following is a 328-amino-acid chain: UPF0285 protein Mevan_1551 (328 aa).

It belongs to the UPF0285 family.

The chain is UPF0285 protein Mevan_1551 from Methanococcus vannielii (strain ATCC 35089 / DSM 1224 / JCM 13029 / OCM 148 / SB).